A 235-amino-acid chain; its full sequence is Ubiquinone biosynthesis O-methyltransferase (235 aa).

S-adenosyl-L-methionine contacts are provided by Arg39, Gly59, Asp80, and Met124.

The protein belongs to the methyltransferase superfamily. UbiG/COQ3 family.

The enzyme catalyses a 3-demethylubiquinol + S-adenosyl-L-methionine = a ubiquinol + S-adenosyl-L-homocysteine + H(+). The catalysed reaction is a 3-(all-trans-polyprenyl)benzene-1,2-diol + S-adenosyl-L-methionine = a 2-methoxy-6-(all-trans-polyprenyl)phenol + S-adenosyl-L-homocysteine + H(+). The protein operates within cofactor biosynthesis; ubiquinone biosynthesis. Functionally, O-methyltransferase that catalyzes the 2 O-methylation steps in the ubiquinone biosynthetic pathway. This Vibrio vulnificus (strain CMCP6) protein is Ubiquinone biosynthesis O-methyltransferase.